The primary structure comprises 236 residues: Ribosomal RNA large subunit methyltransferase E (236 aa).

S-adenosyl-L-methionine is bound by residues G76, W78, D99, D115, and D140. The active-site Proton acceptor is K180.

Belongs to the class I-like SAM-binding methyltransferase superfamily. RNA methyltransferase RlmE family.

It localises to the cytoplasm. It catalyses the reaction uridine(2552) in 23S rRNA + S-adenosyl-L-methionine = 2'-O-methyluridine(2552) in 23S rRNA + S-adenosyl-L-homocysteine + H(+). In terms of biological role, specifically methylates the uridine in position 2552 of 23S rRNA at the 2'-O position of the ribose in the fully assembled 50S ribosomal subunit. The protein is Ribosomal RNA large subunit methyltransferase E of Rhodopseudomonas palustris (strain HaA2).